A 589-amino-acid polypeptide reads, in one-letter code: Early growth response protein 4 (589 aa).

Disordered regions lie at residues 29–101 (GSAL…HSRR), 383–411 (AEGL…ASTQ), and 436–466 (PGSS…GRRG). Positions 76–86 (PLPPASPPPAR) are enriched in pro residues. Over residues 92–101 (ARPRAPHSRR) the composition is skewed to basic residues. Over residues 395–404 (GEGGSSGDGG) the composition is skewed to gly residues. The segment covering 444-454 (PPVPPPPPTPF) has biased composition (pro residues). 3 consecutive C2H2-type zinc fingers follow at residues 483-507 (FACP…LRIH), 513-535 (FQCR…VRTH), and 541-563 (FACD…SKVH).

This sequence belongs to the EGR C2H2-type zinc-finger protein family.

The protein resides in the nucleus. In terms of biological role, transcriptional regulator. Recognizes and binds to the DNA sequence 5'-GCGGGGGCG-3' (GSG). Activates the transcription of target genes whose products are required for mitogenesis and differentiation. The chain is Early growth response protein 4 (EGR4) from Homo sapiens (Human).